The chain runs to 136 residues: Cytochrome c oxidase subunit 13, mitochondrial (136 aa).

The N-terminal 29 residues, 1–29 (MFAQRQMFFARLAANLRAPAVRQTVQRRF), are a transit peptide targeting the mitochondrion. At 30–62 (ASTPANESGKNAFVREREAVKQHAAETTELWRK) the chain is on the mitochondrial matrix side. Residues 63–83 (ISLYGIPPALALAGYNAYTLY) form a helical membrane-spanning segment. Residues 84–136 (NEHWEHWSHLPPLEERTEYPYQNIRTRNYPWGDGDKTLFWNESVNYHNRDKVT) lie on the Mitochondrial intermembrane side of the membrane.

Belongs to the cytochrome c oxidase subunit 6A family. In terms of assembly, component of the cytochrome c oxidase (complex IV, CIV), a multisubunit enzyme composed of 11 subunits. The complex is composed of a catalytic core of 3 subunits Cox1, Cox2 and Cox3, encoded in the mitochondrial DNA, and 8 supernumerary subunits Cox4, Cox5a/Cox5, Cox6, Cox7, Cox8, Cox7a/Cox9, Cox6b/Cox12 and Cox6a/Cox13, which are encoded in the nuclear genome. The complex exists as a monomer or a dimer and forms respiratory supercomplexes (SCs) in the inner mitochondrial membrane with NADH-ubiquinone oxidoreductase (complex I, CI) and ubiquinol-cytochrome c oxidoreductase (cytochrome b-c1 complex, complex III, CIII), resulting in various different assemblies (supercomplexes I(1)IV(1), I(1)III(3)IV(2), III(2)IV(1) and III(2)IV(2) as well as larger supercomplexes of compositions like I(1)III(2)IV(5-6)). Cox6a/Cox13 was not present in the cryo-EM structure. It may be involved in complex IV dimer formation and might not be always expressed. This would explain its absence in the map of the isolated monomer.

It is found in the mitochondrion inner membrane. The protein operates within energy metabolism; oxidative phosphorylation. Component of the cytochrome c oxidase, the last enzyme in the mitochondrial electron transport chain which drives oxidative phosphorylation. The respiratory chain contains 3 multisubunit complexes succinate dehydrogenase (complex II, CII), ubiquinol-cytochrome c oxidoreductase (cytochrome b-c1 complex, complex III, CIII) and cytochrome c oxidase (complex IV, CIV), that cooperate to transfer electrons derived from NADH and succinate to molecular oxygen, creating an electrochemical gradient over the inner membrane that drives transmembrane transport and the ATP synthase. Cytochrome c oxidase is the component of the respiratory chain that catalyzes the reduction of oxygen to water. Electrons originating from reduced cytochrome c in the intermembrane space (IMS) are transferred via the dinuclear copper A center (CU(A)) of Cox2 and heme A of Cox1 to the active site in Cox1, a binuclear center (BNC) formed by heme A3 and copper B (CU(B)). The BNC reduces molecular oxygen to 2 water molecules using 4 electrons from cytochrome c in the IMS and 4 protons from the mitochondrial matrix. The protein is Cytochrome c oxidase subunit 13, mitochondrial (eat-5) of Neurospora crassa (strain ATCC 24698 / 74-OR23-1A / CBS 708.71 / DSM 1257 / FGSC 987).